The sequence spans 204 residues: Recombination protein RecR (204 aa).

The C4-type zinc-finger motif lies at 58–75; that stretch reads CSVCQNITDVGVDPCALC. A Toprim domain is found at 83 to 181; sequence SVICVVESPV…HVTKIARGIP (99 aa).

The protein belongs to the RecR family.

Its function is as follows. May play a role in DNA repair. It seems to be involved in an RecBC-independent recombinational process of DNA repair. It may act with RecF and RecO. The protein is Recombination protein RecR of Pelodictyon phaeoclathratiforme (strain DSM 5477 / BU-1).